The sequence spans 614 residues: Dihydroxy-acid dehydratase (614 aa).

A Mg(2+)-binding site is contributed by Asp-81. Cys-122 contacts [2Fe-2S] cluster. Mg(2+)-binding residues include Asp-123 and Lys-124. The residue at position 124 (Lys-124) is an N6-carboxylysine. Cys-193 is a [2Fe-2S] cluster binding site. Residue Glu-489 coordinates Mg(2+). The Proton acceptor role is filled by Ser-515.

Belongs to the IlvD/Edd family. Homodimer. It depends on [2Fe-2S] cluster as a cofactor. Requires Mg(2+) as cofactor.

It carries out the reaction (2R)-2,3-dihydroxy-3-methylbutanoate = 3-methyl-2-oxobutanoate + H2O. The catalysed reaction is (2R,3R)-2,3-dihydroxy-3-methylpentanoate = (S)-3-methyl-2-oxopentanoate + H2O. It participates in amino-acid biosynthesis; L-isoleucine biosynthesis; L-isoleucine from 2-oxobutanoate: step 3/4. It functions in the pathway amino-acid biosynthesis; L-valine biosynthesis; L-valine from pyruvate: step 3/4. Functions in the biosynthesis of branched-chain amino acids. Catalyzes the dehydration of (2R,3R)-2,3-dihydroxy-3-methylpentanoate (2,3-dihydroxy-3-methylvalerate) into 2-oxo-3-methylpentanoate (2-oxo-3-methylvalerate) and of (2R)-2,3-dihydroxy-3-methylbutanoate (2,3-dihydroxyisovalerate) into 2-oxo-3-methylbutanoate (2-oxoisovalerate), the penultimate precursor to L-isoleucine and L-valine, respectively. The sequence is that of Dihydroxy-acid dehydratase from Marinomonas sp. (strain MWYL1).